Reading from the N-terminus, the 320-residue chain is MARKKIALIGAGQIGGTLAHLAGLKELGDVVLFDIADGVPQGKGLDIAESAPVDGFDAKYAGASDYAAIAGADVVIVTAGVPRKPGMSRDDLIGINLQVMEKVGAGIRTHAPNAFVICITNPLDAMVWALQKFSGLAPNKIVGMAGVLDSARFRHFLAEEFQVSVEDVTAFVLGGHGDDMVPLVRYSTVAGVPLPDLVKMGWTTQEKLDAMVERTRKGGGEIVNLLKTGSAFYAPAASAIAMAESYLKDKRRVLPCAAYLTGQYGIDGLFIGVPIVIGENGVERVVEVEFSAEEKAMFDKSVASVKGLVEACKGINAALA.

Residues 10-15 (GAGQIG) and Asp-34 contribute to the NAD(+) site. Positions 83 and 89 each coordinate substrate. NAD(+) contacts are provided by residues Asn-96 and 119–121 (ITN). Positions 121 and 152 each coordinate substrate. Catalysis depends on His-176, which acts as the Proton acceptor.

This sequence belongs to the LDH/MDH superfamily. MDH type 3 family.

It carries out the reaction (S)-malate + NAD(+) = oxaloacetate + NADH + H(+). Catalyzes the reversible oxidation of malate to oxaloacetate. The protein is Malate dehydrogenase of Methylobacterium sp. (strain 4-46).